Consider the following 122-residue polypeptide: UPF0231 protein VSAL_I2591 (122 aa).

It belongs to the UPF0231 family.

This chain is UPF0231 protein VSAL_I2591, found in Aliivibrio salmonicida (strain LFI1238) (Vibrio salmonicida (strain LFI1238)).